A 99-amino-acid chain; its full sequence is Protein NCBP2AS2 (99 aa).

The tract at residues Glu76 to Ile99 is disordered.

The sequence is that of Protein NCBP2AS2 from Homo sapiens (Human).